Consider the following 370-residue polypeptide: Actin-related protein 2/3 complex subunit 1A-A (370 aa).

6 WD repeats span residues 6 to 45 (FLLE…WVKG), 50 to 89 (EHNG…WKPT), 140 to 179 (PIRS…VDEK), 202 to 241 (SSGG…SVSQ), 244 to 284 (TEFL…TFVS), and 322 to 365 (LHQN…SYIQ).

This sequence belongs to the WD repeat ARPC1 family. In terms of assembly, component of the Arp2/3 complex.

The protein resides in the cytoplasm. The protein localises to the cytoskeleton. Its subcellular location is the nucleus. Functionally, probably functions as a component of the Arp2/3 complex which is involved in regulation of actin polymerization and together with an activating nucleation-promoting factor (NPF) mediates the formation of branched actin networks. In addition to its role in the cytoplasmic cytoskeleton, the Arp2/3 complex also promotes actin polymerization in the nucleus, thereby regulating gene transcription and repair of damaged DNA. This chain is Actin-related protein 2/3 complex subunit 1A-A (arpc1a-a), found in Xenopus laevis (African clawed frog).